A 42-amino-acid polypeptide reads, in one-letter code: uncharacterized protein (42 aa).

The tract at residues 20–42 is disordered; sequence RSGRAERGVRAHSPAWSERPTPN.

This is an uncharacterized protein from Escherichia coli.